The sequence spans 370 residues: MTRGLAPLLPIEFHKMGSFRRPRPRFMSSPVLSELPRFQAARQALQLSSNSAWNSVQTAVINVFKGGGLQSNELYALNESIRRLLKSELGSFITDYFQNQLLAKGLSFVEEKIKLCEGDNRIEVLAEVWDHFFTETLPTLQAIFYPVQGQELTIRQISLLGFRDLVLLKVKLGDVLLLAQSKLPSSVIQMLLILQSVHEPTGPSEGYLQLEELVKQVVSPFLSISGDRSCSGPTYSLARRHSRVRPKVTVLNYASLMTTVGRPLNEMVLTPLTEQEGEAYLEKCGSVRRHTVANAHSDIQLLAMATMMHSGLGEEAGGEDKHLLLPPSFPPPHRQCSSEPSILDSPDELELEDVASGSQEDSELNCASLS.

Serine 28 is subject to Phosphoserine. 2 disordered regions span residues 312 to 346 (LGEE…LDSP) and 351 to 370 (LEDV…ASLS).

This sequence belongs to the PROTOR family. In terms of assembly, interacts with the mammalian target of rapamycin complex 2 (mTORC2) which contains MTOR, MLST8, PRR5, RICTOR, MAPKAP1 and DEPTOR. Interacts with RFFL. Interacts (via C-terminus) with ZFP36 (via C-terminus); this interaction may accelerate ZFP36-mediated mRNA decay during stress. Interacts with RICTOR. Ubiquitinated. Ubiquitination by RFFL promotes proteasomal degradation of PRR5L thereby modifying the substrate-specific activity of the mTORC2 complex. Ubiquitination by RFFL is stimulated by LPA/lysophosphatidic acid.

In terms of biological role, associates with the mTORC2 complex that regulates cellular processes including survival and organization of the cytoskeleton. Regulates the activity of the mTORC2 complex in a substrate-specific manner preventing for instance the specific phosphorylation of PKCs and thereby controlling cell migration. Plays a role in the stimulation of ZFP36-mediated mRNA decay of several ZFP36-associated mRNAs, such as TNF-alpha and GM-CSF, in response to stress. Required for ZFP36 localization to cytoplasmic stress granule (SG) and P-body (PB) in response to stress. This Mus musculus (Mouse) protein is Proline-rich protein 5-like (Prr5l).